Reading from the N-terminus, the 100-residue chain is Putative protein adenylyltransferase MJ1379 (100 aa).

Positions G31–D45 match the GSX(10)DXD motif motif. Residues D43, D45, and D77 each coordinate Mg(2+).

This sequence belongs to the MntA antitoxin family. Probably forms a complex with cognate toxin MJ1380. Mg(2+) is required as a cofactor.

The enzyme catalyses L-tyrosyl-[protein] + ATP = O-(5'-adenylyl)-L-tyrosyl-[protein] + diphosphate. It catalyses the reaction O-(5'-adenylyl)-L-tyrosyl-[protein] + ATP = O-[5'-(adenylyl-(5'-&gt;3')-adenylyl)]-L-tyrosyl-[protein] + diphosphate. Probable antitoxin component of a putative type VII toxin-antitoxin (TA) system. Neutralizes cognate toxic MJ1380 by di-AMPylation. The chain is Putative protein adenylyltransferase MJ1379 from Methanocaldococcus jannaschii (strain ATCC 43067 / DSM 2661 / JAL-1 / JCM 10045 / NBRC 100440) (Methanococcus jannaschii).